Consider the following 300-residue polypeptide: Large ribosomal subunit protein uL18 (300 aa).

Basic and acidic residues predominate over residues Asn246 to Arg267. Positions Asn246 to Ala276 are disordered.

This sequence belongs to the universal ribosomal protein uL18 family. As to quaternary structure, component of the large ribosomal subunit (LSU).

The protein resides in the cytoplasm. It localises to the nucleus. Functionally, component of the ribosome, a large ribonucleoprotein complex responsible for the synthesis of proteins in the cell. The small ribosomal subunit (SSU) binds messenger RNAs (mRNAs) and translates the encoded message by selecting cognate aminoacyl-transfer RNA (tRNA) molecules. The large subunit (LSU) contains the ribosomal catalytic site termed the peptidyl transferase center (PTC), which catalyzes the formation of peptide bonds, thereby polymerizing the amino acids delivered by tRNAs into a polypeptide chain. The nascent polypeptides leave the ribosome through a tunnel in the LSU and interact with protein factors that function in enzymatic processing, targeting, and the membrane insertion of nascent chains at the exit of the ribosomal tunnel. The protein is Large ribosomal subunit protein uL18 (RpL5) of Toxoptera citricida (Brown citrus aphid).